Reading from the N-terminus, the 349-residue chain is uncharacterized protein (349 aa).

Phosphoserine is present on serine 2.

This is an uncharacterized protein from Saccharomyces cerevisiae (strain ATCC 204508 / S288c) (Baker's yeast).